The following is a 582-amino-acid chain: Membrane-bound O-acyltransferase GUP1 (582 aa).

At M1–R61 the chain is on the extracellular side. The helical transmembrane segment at W62–F82 threads the bilayer. Topologically, residues K83–R121 are cytoplasmic. The chain crosses the membrane as a helical span at residues F122–I144. Topologically, residues N145–D158 are extracellular. The chain crosses the membrane as a helical span at residues F159–I179. Residues H180–K195 are Cytoplasmic-facing. A helical transmembrane segment spans residues L196 to G216. At N217–N294 the chain is on the extracellular side. The helical transmembrane segment at I295 to T315 threads the bilayer. The Cytoplasmic portion of the chain corresponds to F316–R343. A helical membrane pass occupies residues F344 to S364. Topologically, residues K365–L373 are extracellular. A helical transmembrane segment spans residues P374–I394. Over P395–R454 the chain is Cytoplasmic. The next 2 membrane-spanning stretches (helical) occupy residues I455 to L475 and L476 to F496. The active site involves H469. Topologically, residues K497–H507 are cytoplasmic. A helical membrane pass occupies residues L508–F528. Residues C529–G548 are Extracellular-facing. Residues V549–I569 form a helical membrane-spanning segment. Residues R570–C582 are Cytoplasmic-facing.

It belongs to the membrane-bound acyltransferase family.

It localises to the cell membrane. The protein localises to the endoplasmic reticulum membrane. The protein resides in the mitochondrion membrane. Its function is as follows. Membrane-bound O-acyltransferase involved in the remodeling of glycosylphosphatidylinositol (GPI) anchors. Acts only on GPI-anchored proteins, but not on free GPI lipids. Also involved in lipid metabolism, having profound effects on sphingolipid-sterol-ordered domains integrity and assembly. Involved in cell integrity and apoptosis. The polypeptide is Membrane-bound O-acyltransferase GUP1 (GUP1) (Candida tropicalis (Yeast)).